The primary structure comprises 188 residues: Elongation factor P (188 aa).

Belongs to the elongation factor P family.

It is found in the cytoplasm. It participates in protein biosynthesis; polypeptide chain elongation. In terms of biological role, involved in peptide bond synthesis. Stimulates efficient translation and peptide-bond synthesis on native or reconstituted 70S ribosomes in vitro. Probably functions indirectly by altering the affinity of the ribosome for aminoacyl-tRNA, thus increasing their reactivity as acceptors for peptidyl transferase. This chain is Elongation factor P, found in Bradyrhizobium sp. (strain BTAi1 / ATCC BAA-1182).